The chain runs to 148 residues: Oleosin 16 kDa (148 aa).

The segment at 1 to 21 (MADQHRGVIGGGGYGDRGGQE) is disordered. Residue Ala2 is modified to N-acetylalanine. Residues 2 to 34 (ADQHRGVIGGGGYGDRGGQEQQEKQPFMMTALK) form a polar region. Residues 8–17 (VIGGGGYGDR) are compositionally biased toward gly residues. Positions 35-106 (TVTAATAGGS…AALSVFSWMY (72 aa)) are hydrophobic. A run of 3 helical transmembrane segments spans residues 43–63 (GSML…LTVA), 66–86 (VLVI…LMAA), and 87–107 (GFVT…WMYK).

It belongs to the oleosin family.

It localises to the lipid droplet. The protein resides in the membrane. Functionally, may have a structural role to stabilize the lipid body during desiccation of the seed by preventing coalescence of the oil. Probably interacts with both lipid and phospholipid moieties of lipid bodies. May also provide recognition signals for specific lipase anchorage in lipolysis during seedling growth. The chain is Oleosin 16 kDa (OLE16) from Oryza sativa subsp. japonica (Rice).